The chain runs to 120 residues: NAD(P)H-quinone oxidoreductase subunit 3, chloroplastic (120 aa).

3 consecutive transmembrane segments (helical) span residues 9 to 29 (YFWLFLLLASLIPPVASPISS), 64 to 84 (MFASVFVISDAETVSLYPWAM), and 89 to 109 (LGVPASAEASISVTIPIVGSV).

This sequence belongs to the complex I subunit 3 family. NDH is composed of at least 16 different subunits, 5 of which are encoded in the nucleus.

The protein resides in the plastid. It localises to the chloroplast thylakoid membrane. The catalysed reaction is a plastoquinone + NADH + (n+1) H(+)(in) = a plastoquinol + NAD(+) + n H(+)(out). The enzyme catalyses a plastoquinone + NADPH + (n+1) H(+)(in) = a plastoquinol + NADP(+) + n H(+)(out). Its function is as follows. NDH shuttles electrons from NAD(P)H:plastoquinone, via FMN and iron-sulfur (Fe-S) centers, to quinones in the photosynthetic chain and possibly in a chloroplast respiratory chain. The immediate electron acceptor for the enzyme in this species is believed to be plastoquinone. Couples the redox reaction to proton translocation, and thus conserves the redox energy in a proton gradient. This Huperzia lucidula (Shining clubmoss) protein is NAD(P)H-quinone oxidoreductase subunit 3, chloroplastic.